A 497-amino-acid chain; its full sequence is Glycerol kinase (497 aa).

Residue T13 coordinates ADP. Residues T13, T14, and S15 each coordinate ATP. T13 contributes to the sn-glycerol 3-phosphate binding site. R17 serves as a coordination point for ADP. Sn-glycerol 3-phosphate is bound by residues R83, E84, and Y135. 3 residues coordinate glycerol: R83, E84, and Y135. H231 bears the Phosphohistidine; by HPr mark. D245 serves as a coordination point for sn-glycerol 3-phosphate. Residues D245 and Q246 each contribute to the glycerol site. Residues T267 and G310 each contribute to the ADP site. Residues T267, G310, Q314, and G411 each contribute to the ATP site. ADP-binding residues include G411 and N415.

Belongs to the FGGY kinase family. In terms of assembly, homotetramer and homodimer (in equilibrium). Post-translationally, the phosphoenolpyruvate-dependent sugar phosphotransferase system (PTS), including enzyme I, and histidine-containing protein (HPr) are required for the phosphorylation, which leads to the activation of the enzyme.

It carries out the reaction glycerol + ATP = sn-glycerol 3-phosphate + ADP + H(+). It participates in polyol metabolism; glycerol degradation via glycerol kinase pathway; sn-glycerol 3-phosphate from glycerol: step 1/1. With respect to regulation, activated by phosphorylation and inhibited by fructose 1,6-bisphosphate (FBP). In terms of biological role, key enzyme in the regulation of glycerol uptake and metabolism. Catalyzes the phosphorylation of glycerol to yield sn-glycerol 3-phosphate. In Listeria monocytogenes serovar 1/2a (strain ATCC BAA-679 / EGD-e), this protein is Glycerol kinase.